The primary structure comprises 85 residues: Large ribosomal subunit protein bL27 (85 aa).

A disordered region spans residues 1 to 23 (MAHKKGQGSTQNNRDSAGRRLGV).

This sequence belongs to the bacterial ribosomal protein bL27 family.

This chain is Large ribosomal subunit protein bL27, found in Helicobacter hepaticus (strain ATCC 51449 / 3B1).